A 318-amino-acid polypeptide reads, in one-letter code: MTPPEERQMLRETVASLVAKHAGPAAVRAAMASDRGYDESLWRLLCEQVGAAALVIPEELGGAGGELADAAIVVQELGRALVPSPLLGTTLAELALLAAAKPDAQALTELAQGSAIGALVLDPDYVVNGDIADIVVAATSGQLTRWTRFSAQPVATMDPTRRLARLQSEETEPLCPDPGIADTAAILLAAEQIGAAERCLQLTVEYAKSRVQFGRPIGSFQALKHRMADLYVTIAAARAVVADACHAPTPTNAATARLAASEALSTAAAEGIQLHGGIAITWEHDMHLYFKRAHGSAQLLESPREVLRRLESEVWESP.

2 residues coordinate FAD: Arg210 and Gly277.

The protein belongs to the acyl-CoA dehydrogenase family. As to quaternary structure, heterotetramer composed of 2 IpdE1 subunits and 2 IpdE2 subunits. It depends on FAD as a cofactor.

It catalyses the reaction 3-[(3aS,4S,5R,7aS)-5-hydroxy-7a-methyl-1-oxo-octahydro-1H-inden-4-yl]propanoyl-CoA + A = (2E)-3-[(3aS,4S,5R,7aS)-5-hydroxy-7a-methyl-1-oxo-octahydro-1H-inden-4-yl]prop-2-enoyl-CoA + AH2. It functions in the pathway steroid metabolism; cholesterol degradation. Functionally, involved in cholesterol degradation. Catalyzes the dehydrogenation of 5OH-HIP-CoA to 5OH-HIPE-CoA. Can also use octanoyl-CoA and dihydroferuloyl-CoA, with lower efficiency. Cannot use 3-oxo-4-pregnene-20-carboxyl-CoA (3-OPC-CoA). This chain is Acyl-CoA dehydrogenase IpdE2, found in Mycobacterium tuberculosis (strain ATCC 25618 / H37Rv).